The chain runs to 495 residues: MANPDHVSDVLHNLSIDPTTKALAPDSETKLQGAYGGNGNDFLLNDELVEATKIGKPSLLSKDGGVTKDKGSNLKKLGYQSAAYNAKGSYGKGAYAYGYYPPAYQYPRHGYTGSYASGKTNLQYQYLTQQGRSAGNGQSYGGYMDNIYSNYGMCGPYTNGYGYGSYGYDSWKYMPNWYAVNNTYKPRNGYHGYGKENIEGLNEMNRGPRAKGFNSQDGSKVMAVSLKEQRVTETEKLSEDVSLLDPKDYNKIDFPETYTEAKFYVIKSYSEDDIHKSIKYSVWSSTPNGNKKLDASYNEAKQKSDGCPVFLLFSVNTSGQFVGLAEMVGPVDFNKTVEYWQQDKWIGCFPVKWHFVKDIPNSSLRHITLENNENKPVTNSRDTQEVKLEQGIKVIKIFKDHASKTCILDDFEFYENRQKIIQERKSKHLQIKKQTLVANADKGVMSKINLVKPQESTTASEDAAALGVAAEVTKESKVVKETELPVEKNAVATAC.

In terms of domain architecture, YTH spans Ala-261 to Phe-398. Residues Lys-267–Tyr-269, Asp-273, Trp-283–Ser-284, Asn-316, Trp-340, Trp-345, and Trp-353 contribute to the RNA site.

In terms of tissue distribution, expressed in the shoot apex, at the sites of leaf formation, and in emerging leaves.

It is found in the cytoplasm. Its function is as follows. Specifically recognizes and binds N6-methyladenosine (m6A)-containing RNAs, and regulates mRNA stability. M6A is a modification present at internal sites of mRNAs and some non-coding RNAs and plays a role in mRNA stability and processing. Required for the correct timing of leaf formation and normal leaf morphology. Required for proper trichome branching and morphology. Functions redundantly with ECT2. The sequence is that of YTH domain-containing protein ECT3 from Arabidopsis thaliana (Mouse-ear cress).